We begin with the raw amino-acid sequence, 710 residues long: DNA topoisomerase 1 (710 aa).

Positions 1–22 (MPTSTKSKTKTTTKKKTTRKRV) are disordered. Over residues 7-22 (SKTKTTTKKKTTRKRV) the composition is skewed to basic residues. The 111-residue stretch at 26–136 (KNLVIVESPA…EKNRVVFNEI (111 aa)) folds into the Toprim domain. Glu32 and Asp105 together coordinate Mg(2+). In terms of domain architecture, Topo IA-type catalytic spans 152–574 (DVDLVDAQQA…QFYKPFAKEL (423 aa)). Positions 186–191 (SAGRVQ) are interaction with DNA. The active-site O-(5'-phospho-DNA)-tyrosine intermediate is Tyr321. 2 C4-type zinc fingers span residues 595–621 (CDVC…FPDC) and 635–663 (CPLC…YPDC). The segment at 676-702 (CPKSGHFLVEKKVRGGGKQVVCSNDEC) adopts a C4-type 3; atypical zinc-finger fold.

It belongs to the type IA topoisomerase family. Monomer. The cofactor is Mg(2+).

The enzyme catalyses ATP-independent breakage of single-stranded DNA, followed by passage and rejoining.. Releases the supercoiling and torsional tension of DNA, which is introduced during the DNA replication and transcription, by transiently cleaving and rejoining one strand of the DNA duplex. Introduces a single-strand break via transesterification at a target site in duplex DNA. The scissile phosphodiester is attacked by the catalytic tyrosine of the enzyme, resulting in the formation of a DNA-(5'-phosphotyrosyl)-enzyme intermediate and the expulsion of a 3'-OH DNA strand. The free DNA strand then undergoes passage around the unbroken strand, thus removing DNA supercoils. Finally, in the religation step, the DNA 3'-OH attacks the covalent intermediate to expel the active-site tyrosine and restore the DNA phosphodiester backbone. This Lactococcus lactis subsp. lactis (strain IL1403) (Streptococcus lactis) protein is DNA topoisomerase 1.